We begin with the raw amino-acid sequence, 173 residues long: Shikimate kinase 1 (173 aa).

ATP is bound at residue 14–19; that stretch reads GAGKST. Ser18 contributes to the Mg(2+) binding site. Substrate contacts are provided by Asp36, Arg60, and Gly82. Residue Arg120 participates in ATP binding. Arg140 is a substrate binding site. Gln157 is a binding site for ATP.

This sequence belongs to the shikimate kinase family. In terms of assembly, monomer. It depends on Mg(2+) as a cofactor.

It is found in the cytoplasm. The enzyme catalyses shikimate + ATP = 3-phosphoshikimate + ADP + H(+). Its pathway is metabolic intermediate biosynthesis; chorismate biosynthesis; chorismate from D-erythrose 4-phosphate and phosphoenolpyruvate: step 5/7. Functionally, catalyzes the specific phosphorylation of the 3-hydroxyl group of shikimic acid using ATP as a cosubstrate. The protein is Shikimate kinase 1 of Yersinia pseudotuberculosis serotype O:1b (strain IP 31758).